A 498-amino-acid polypeptide reads, in one-letter code: MNKSNPAGSVTGSDIIDAKIEEHQLCGSKKCPSCGHKLEGKPQDWVGLPAGVKFDPTDQELIEHLEAKVLAKDFKSHPLIDEFIPTIEGEDGICYTHPEKLPGVTRDGLSRHFFHRPSKAYTTGTRKRRKIQTECDNNLQGSSSSGETRWHKTGKTRPVMVNGKQKGCKKILVLYTNFGKNRKPEKTNWVMHQYHLGTHEEEKEGELVVSKIFYQTQPRQCNWSSSTSSLNAIGGGGGEASSGGGGGEYHMRRDSGTTSGGSCSSSREIINVNPPNRSDEIGGVGGGVMAVAAAAAAVAAGLPSYAMDQLSFVPFMKSFDEVARRETPQTGHATCEDVMAEQHRHRHQPSSSTSHHMAHDHHHHHHQQQQQRHHAFNISQPTHPISTIISPSTSLHHASINILDDNPYHVHRILLPNENYQTQQQLRQEGEEEHNDGKMGGRSASGLEELIMGCTSSTTHHDVKDGSSSMGNQQEAEWLKYSTFWPAPDSSDNQDHHG.

An NAC domain is found at 48-215; sequence LPAGVKFDPT…ELVVSKIFYQ (168 aa). Residues 166-221 mediate DNA binding; sequence KGCKKILVLYTNFGKNRKPEKTNWVMHQYHLGTHEEEKEGELVVSKIFYQTQPRQC. Disordered stretches follow at residues 225–278, 338–374, 423–443, and 457–498; these read SSTS…PNRS, VMAE…QRHH, QQQL…GGRS, and STTH…DHHG. Over residues 233–248 the composition is skewed to gly residues; the sequence is IGGGGGEASSGGGGGE. Positions 256–266 are enriched in low complexity; the sequence is GTTSGGSCSSS. Basic residues predominate over residues 356 to 374; that stretch reads HMAHDHHHHHHQQQQQRHH. Positions 466–475 are enriched in polar residues; that stretch reads GSSSMGNQQE.

In terms of tissue distribution, expressed in the vascular cylinder of roots. Expressed in the differentiation zone of the root stele.

The protein resides in the nucleus. In terms of biological role, transcription activator involved in xylem formation. Promotes the expression of the secondary wall-associated transcription factor MYB46. Functions upstream of NAC030/VND7, a master switch of xylem vessel differentiation. Acts as a upstream regulator of NAC101/VND6 and LBD30/ASL19. The polypeptide is NAC domain-containing protein 75 (Arabidopsis thaliana (Mouse-ear cress)).